A 427-amino-acid chain; its full sequence is MESLTLQPIARVDGTINLPGSKSVSNRALLLAALASGTTVLTNLLDSDDVRHMLNALSALGVSYTLSADRTRCEITGQGGVLHAEGALELFLGNAGTAMRPLAAALCLGANDIVLTGEPRMKERPIGHLVDALRQGGAKIDYLEQENYPPLRLRGGFSGGHVEVDGSVSSQFLTALLMTAPLAPQDTTIAIKGDLVSKPYIDITLNLMKTFGVEVENQNYQRFVVKGEQQYRSPGQYLVEGDASSASYFLAAGAIKGGTVKVTGIGRNSMQGDIRFADVLEKMGATITWGDDFIACTRGELNAVDMDMNHIPDAAMTIATAALFAKGTTTLRNIYNWRVKETDRLFAMATELRKVGAEVEEGHDFIRITPPAQLQFAEIGTYNDHRMAMCFSLVALSDTPVTILDPKCTAKTFPDYFEQLARISTPA.

Residues K22, S23, and R27 each contribute to the 3-phosphoshikimate site. A phosphoenolpyruvate-binding site is contributed by K22. Phosphoenolpyruvate contacts are provided by G96 and R124. The 3-phosphoshikimate site is built by S169, S170, Q171, S197, D313, N336, and K340. Q171 contacts phosphoenolpyruvate. The active-site Proton acceptor is the D313. The phosphoenolpyruvate site is built by R344, R386, and K411.

It belongs to the EPSP synthase family. Monomer.

The protein resides in the cytoplasm. The enzyme catalyses 3-phosphoshikimate + phosphoenolpyruvate = 5-O-(1-carboxyvinyl)-3-phosphoshikimate + phosphate. The protein operates within metabolic intermediate biosynthesis; chorismate biosynthesis; chorismate from D-erythrose 4-phosphate and phosphoenolpyruvate: step 6/7. Catalyzes the transfer of the enolpyruvyl moiety of phosphoenolpyruvate (PEP) to the 5-hydroxyl of shikimate-3-phosphate (S3P) to produce enolpyruvyl shikimate-3-phosphate and inorganic phosphate. In Citrobacter koseri (strain ATCC BAA-895 / CDC 4225-83 / SGSC4696), this protein is 3-phosphoshikimate 1-carboxyvinyltransferase.